Reading from the N-terminus, the 509-residue chain is Aspartyl/glutamyl-tRNA(Asn/Gln) amidotransferase subunit B (509 aa).

The protein belongs to the GatB/GatE family. GatB subfamily. As to quaternary structure, heterotrimer of A, B and C subunits.

The catalysed reaction is L-glutamyl-tRNA(Gln) + L-glutamine + ATP + H2O = L-glutaminyl-tRNA(Gln) + L-glutamate + ADP + phosphate + H(+). The enzyme catalyses L-aspartyl-tRNA(Asn) + L-glutamine + ATP + H2O = L-asparaginyl-tRNA(Asn) + L-glutamate + ADP + phosphate + 2 H(+). Allows the formation of correctly charged Asn-tRNA(Asn) or Gln-tRNA(Gln) through the transamidation of misacylated Asp-tRNA(Asn) or Glu-tRNA(Gln) in organisms which lack either or both of asparaginyl-tRNA or glutaminyl-tRNA synthetases. The reaction takes place in the presence of glutamine and ATP through an activated phospho-Asp-tRNA(Asn) or phospho-Glu-tRNA(Gln). This Psychrobacter arcticus (strain DSM 17307 / VKM B-2377 / 273-4) protein is Aspartyl/glutamyl-tRNA(Asn/Gln) amidotransferase subunit B.